Consider the following 189-residue polypeptide: Large ribosomal subunit protein eL18 (189 aa).

This sequence belongs to the eukaryotic ribosomal protein eL18 family.

It is found in the cytoplasm. The chain is Large ribosomal subunit protein eL18 (RpL18) from Aedes aegypti (Yellowfever mosquito).